Consider the following 376-residue polypeptide: 1-deoxy-D-xylulose 5-phosphate reductoisomerase (376 aa).

The NADPH site is built by Ser10, Gly11, Ser12, Val13, Gly36, Lys37, Asn38, and Asn118. Position 119 (Lys119) interacts with 1-deoxy-D-xylulose 5-phosphate. Residue Glu120 participates in NADPH binding. Residue Asp144 participates in Mn(2+) binding. Ser145, Glu146, Ser170, and His193 together coordinate 1-deoxy-D-xylulose 5-phosphate. Glu146 is a binding site for Mn(2+). Gly199 contacts NADPH. 1-deoxy-D-xylulose 5-phosphate is bound by residues Ser206, Asn211, Lys212, and Glu215. Position 215 (Glu215) interacts with Mn(2+).

It belongs to the DXR family. Requires Mg(2+) as cofactor. Mn(2+) is required as a cofactor.

It catalyses the reaction 2-C-methyl-D-erythritol 4-phosphate + NADP(+) = 1-deoxy-D-xylulose 5-phosphate + NADPH + H(+). Its pathway is isoprenoid biosynthesis; isopentenyl diphosphate biosynthesis via DXP pathway; isopentenyl diphosphate from 1-deoxy-D-xylulose 5-phosphate: step 1/6. Functionally, catalyzes the NADPH-dependent rearrangement and reduction of 1-deoxy-D-xylulose-5-phosphate (DXP) to 2-C-methyl-D-erythritol 4-phosphate (MEP). The protein is 1-deoxy-D-xylulose 5-phosphate reductoisomerase of Macrococcus caseolyticus (strain JCSC5402) (Macrococcoides caseolyticum).